Here is a 366-residue protein sequence, read N- to C-terminus: Histidinol-phosphate aminotransferase (366 aa).

Position 228 is an N6-(pyridoxal phosphate)lysine (Lys228).

The protein belongs to the class-II pyridoxal-phosphate-dependent aminotransferase family. Histidinol-phosphate aminotransferase subfamily. As to quaternary structure, homodimer. Pyridoxal 5'-phosphate serves as cofactor.

The enzyme catalyses L-histidinol phosphate + 2-oxoglutarate = 3-(imidazol-4-yl)-2-oxopropyl phosphate + L-glutamate. It functions in the pathway amino-acid biosynthesis; L-histidine biosynthesis; L-histidine from 5-phospho-alpha-D-ribose 1-diphosphate: step 7/9. The sequence is that of Histidinol-phosphate aminotransferase from Corynebacterium glutamicum (strain R).